Here is a 409-residue protein sequence, read N- to C-terminus: Lissencephaly-1 homolog (409 aa).

In terms of domain architecture, LisH spans 7–39 (RRERSNQAIADYLGSNGYTDALEAFRKEADMPN). A coiled-coil region spans residues 54–81 (TSVIRLQKKVMELEAKLSEAEKEAIEGA). 7 WD repeats span residues 104–145 (GHRA…RTLK), 146–185 (GHTDSVQDLAFDSHGKLLASCSSDLSIKLWDFQQTFECVK), 189–228 (GHDHNVSSVSFVPAGDYLLSASRDKTIKMWEVATGYCVKT), 231–270 (GHREWVRMVRVNVDGSLMASCSNDHSVRVWQTNSKECKAE), 273–332 (EHEN…CLFT), 335–374 (GHDNWVRGIVFHPGGKYMLSASDDKTLRIWDLRNKRCMKT), and 377–409 (AHSHFCTSLDMHKSHPYVISGSVDTTVKVWECR).

Belongs to the WD repeat LIS1/nudF family.

It is found in the cytoplasm. The protein resides in the cytoskeleton. The protein localises to the microtubule organizing center. Its subcellular location is the centrosome. In terms of biological role, positively regulates the activity of the minus-end directed microtubule motor protein dynein. May enhance dynein-mediated microtubule sliding by targeting dynein to the microtubule plus end. Required for several dynein- and microtubule-dependent processes. In Aedes aegypti (Yellowfever mosquito), this protein is Lissencephaly-1 homolog.